The primary structure comprises 335 residues: MQLEIINPESTLINDVVAHRIAFSIGSNFNIYWYGIIFVCGFLLAILTYSLRLKFHYKVPYDPGFYYIFLAIPMTIIGARLWSLAIGDAKDFFDFRNGGLAIQGGVIAGVLSAAIYFPLILRMPKYHVRDLDADGNVIIRQPSMWIYADAIIPTILIGQALGRWGNFINGEIFGAESTVNDLQWLKKAMPAVFEGMKHYFIEGDKTLFTIYQPLFLYESFFNVIVFVFIYFGLSYIKQLKIGFVSMSYFFFYGVIRFSTESARAPQFSFAGTYVINSLLLIFGVLGALYVQFIAPILRKRFLLDAIIELFYKKKQQAHKFGQLRNPEEFLYYCHK.

The next 3 membrane-spanning stretches (helical) occupy residues 31 to 51 (IYWY…TYSL), 67 to 87 (YIFL…LAIG), and 100 to 120 (LAIQ…FPLI). R163 contacts a 1,2-diacyl-sn-glycero-3-phospho-(1'-sn-glycerol). Helical transmembrane passes span 213-233 (PLFL…YFGL), 235-255 (YIKQ…YGVI), and 277-297 (SLLL…APIL).

Belongs to the Lgt family.

It is found in the cell membrane. The enzyme catalyses L-cysteinyl-[prolipoprotein] + a 1,2-diacyl-sn-glycero-3-phospho-(1'-sn-glycerol) = an S-1,2-diacyl-sn-glyceryl-L-cysteinyl-[prolipoprotein] + sn-glycerol 1-phosphate + H(+). It participates in protein modification; lipoprotein biosynthesis (diacylglyceryl transfer). Catalyzes the transfer of the diacylglyceryl group from phosphatidylglycerol to the sulfhydryl group of the N-terminal cysteine of a prolipoprotein, the first step in the formation of mature lipoproteins. The sequence is that of Phosphatidylglycerol--prolipoprotein diacylglyceryl transferase from Ureaplasma urealyticum serovar 10 (strain ATCC 33699 / Western).